The primary structure comprises 568 residues: Proline--tRNA ligase (568 aa).

This sequence belongs to the class-II aminoacyl-tRNA synthetase family. ProS type 1 subfamily. Homodimer.

The protein resides in the cytoplasm. It carries out the reaction tRNA(Pro) + L-proline + ATP = L-prolyl-tRNA(Pro) + AMP + diphosphate. Its function is as follows. Catalyzes the attachment of proline to tRNA(Pro) in a two-step reaction: proline is first activated by ATP to form Pro-AMP and then transferred to the acceptor end of tRNA(Pro). As ProRS can inadvertently accommodate and process non-cognate amino acids such as alanine and cysteine, to avoid such errors it has two additional distinct editing activities against alanine. One activity is designated as 'pretransfer' editing and involves the tRNA(Pro)-independent hydrolysis of activated Ala-AMP. The other activity is designated 'posttransfer' editing and involves deacylation of mischarged Ala-tRNA(Pro). The misacylated Cys-tRNA(Pro) is not edited by ProRS. The protein is Proline--tRNA ligase of Halothermothrix orenii (strain H 168 / OCM 544 / DSM 9562).